We begin with the raw amino-acid sequence, 307 residues long: Plasmodesmata-located protein 2 (307 aa).

The signal sequence occupies residues 1 to 23 (MGLSISFLSIIMMMCLLFPDLNV). The Extracellular segment spans residues 24–275 (VVKSATTEYT…STSTGATGKT (252 aa)). Gnk2-homologous domains are found at residues 33-136 (TTLI…VSGF) and 141-240 (GMEM…YYPN). 6 disulfide bridges follow: Cys-40–Cys-114, Cys-90–Cys-99, Cys-102–Cys-127, Cys-149–Cys-218, Cys-194–Cys-203, and Cys-206–Cys-231. Over residues 246-268 (SSSSSSSSSSSSSGSSNSDPSTS) the composition is skewed to low complexity. Positions 246-270 (SSSSSSSSSSSSSGSSNSDPSTSTG) are disordered. Residues 276-296 (VAIIVGGAAGVGFLVICLLFA) form a helical membrane-spanning segment. Positions 276–296 (VAIIVGGAAGVGFLVICLLFA) are necessary and sufficient for plasmodesmal targeting. Topologically, residues 297 to 307 (KNLMRKKHDDY) are cytoplasmic.

It belongs to the cysteine-rich repeat secretory protein family. Plasmodesmata-located proteins (PDLD) subfamily. (Microbial infection) Interacts with Grapevine fanleaf virus (GFLV) 2B-MP. In terms of tissue distribution, highly expressed in inflorescence shoot apex. Uniformly expressed within the inflorescence meristem with the exception of a boundary zone between floral primordia and the meristem where the expression is weaker (at protein level).

It is found in the cell membrane. The protein resides in the cell junction. Its subcellular location is the plasmodesma. Its function is as follows. Modulates cell-to-cell trafficking. The chain is Plasmodesmata-located protein 2 from Arabidopsis thaliana (Mouse-ear cress).